A 196-amino-acid polypeptide reads, in one-letter code: Imidazoleglycerol-phosphate dehydratase (196 aa).

Belongs to the imidazoleglycerol-phosphate dehydratase family.

The protein resides in the cytoplasm. It carries out the reaction D-erythro-1-(imidazol-4-yl)glycerol 3-phosphate = 3-(imidazol-4-yl)-2-oxopropyl phosphate + H2O. Its pathway is amino-acid biosynthesis; L-histidine biosynthesis; L-histidine from 5-phospho-alpha-D-ribose 1-diphosphate: step 6/9. In Ralstonia pickettii (strain 12J), this protein is Imidazoleglycerol-phosphate dehydratase.